A 242-amino-acid polypeptide reads, in one-letter code: Type III pantothenate kinase (242 aa).

An ATP-binding site is contributed by 7-14; that stretch reads DLGNSRFK. Residues Y91 and 98 to 101 contribute to the substrate site; that span reads GVDR. Residue D100 is the Proton acceptor of the active site. T121 is an ATP binding site. A substrate-binding site is contributed by T171.

The protein belongs to the type III pantothenate kinase family. As to quaternary structure, homodimer. NH4(+) is required as a cofactor. It depends on K(+) as a cofactor.

It localises to the cytoplasm. It catalyses the reaction (R)-pantothenate + ATP = (R)-4'-phosphopantothenate + ADP + H(+). Its pathway is cofactor biosynthesis; coenzyme A biosynthesis; CoA from (R)-pantothenate: step 1/5. In terms of biological role, catalyzes the phosphorylation of pantothenate (Pan), the first step in CoA biosynthesis. The sequence is that of Type III pantothenate kinase from Xanthomonas axonopodis pv. citri (strain 306).